Here is an 883-residue protein sequence, read N- to C-terminus: Phosphoenolpyruvate carboxylase (883 aa).

Active-site residues include His138 and Lys546.

This sequence belongs to the PEPCase type 1 family. As to quaternary structure, homotetramer. Mg(2+) serves as cofactor.

The catalysed reaction is oxaloacetate + phosphate = phosphoenolpyruvate + hydrogencarbonate. Its activity is regulated as follows. The enzyme has distinct binding sites for each of the allosteric effectors such as acetyl-CoA, fructose 1,6-bisphosphate, guanosine 3'-diphosphate 5'-diphosphate, long chain fatty acids, and L-aspartate. In terms of biological role, forms oxaloacetate, a four-carbon dicarboxylic acid source for the tricarboxylic acid cycle. In Salmonella typhi, this protein is Phosphoenolpyruvate carboxylase (ppc).